We begin with the raw amino-acid sequence, 166 residues long: NADH-ubiquinone oxidoreductase chain 6 (166 aa).

A run of 5 helical transmembrane segments spans residues 1-21, 26-46, 47-67, 87-107, and 139-159; these read MMYF…AFAS, IYGG…VVSL, GGSF…LVVF, VFTN…YFSG, and CGGW…FVVL.

It belongs to the complex I subunit 6 family. In terms of assembly, core subunit of respiratory chain NADH dehydrogenase (Complex I) which is composed of 45 different subunits.

The protein resides in the mitochondrion inner membrane. It catalyses the reaction a ubiquinone + NADH + 5 H(+)(in) = a ubiquinol + NAD(+) + 4 H(+)(out). Its function is as follows. Core subunit of the mitochondrial membrane respiratory chain NADH dehydrogenase (Complex I) which catalyzes electron transfer from NADH through the respiratory chain, using ubiquinone as an electron acceptor. Essential for the catalytic activity and assembly of complex I. The chain is NADH-ubiquinone oxidoreductase chain 6 (MT-ND6) from Ornithorhynchus anatinus (Duckbill platypus).